The chain runs to 493 residues: Dihydro-heme d1 dehydrogenase (493 aa).

Residues 1–18 form the signal peptide; sequence MRLIGLALGLLLGALAQA. Residues 19-96 form the Cytochrome c domain; sequence GEAPGEALYR…ALVAYLYQAP (78 aa). Cysteine 31, cysteine 34, histidine 35, arginine 68, and methionine 73 together coordinate heme c. A D1-heme domain region spans residues 114-468; that stretch reads PHPLATLPSR…YDAHSLEEVK (355 aa). Residues histidine 165, glycine 167, lysine 169, arginine 182, arginine 207, asparagine 208, histidine 341, arginine 390, and histidine 435 each contribute to the heme d1 site. A heme c-binding site is contributed by arginine 182.

The protein belongs to the cytochrome c family. In terms of assembly, monomer. Heme c serves as cofactor.

It is found in the periplasm. It carries out the reaction dihydro-heme d1 + A = heme d1 + AH2. The protein operates within porphyrin-containing compound metabolism. Its function is as follows. Involved in heme d1 biosynthesis. Catalyzes the introduction of a double bond into the propionate side chain of pyrrole ring D of dihydro-heme d1, therefore converting dihydro-heme d1 to heme d1. The chain is Dihydro-heme d1 dehydrogenase from Pseudomonas aeruginosa (strain ATCC 15692 / DSM 22644 / CIP 104116 / JCM 14847 / LMG 12228 / 1C / PRS 101 / PAO1).